Consider the following 311-residue polypeptide: p-hydroxybenzoic acid efflux pump subunit AaeA (311 aa).

A helical membrane pass occupies residues 11–31 (VGITVLVVVLAVIAIFNVWAF).

The protein belongs to the membrane fusion protein (MFP) (TC 8.A.1) family.

It localises to the cell inner membrane. Its function is as follows. Forms an efflux pump with AaeB. The sequence is that of p-hydroxybenzoic acid efflux pump subunit AaeA from Yersinia pseudotuberculosis serotype O:1b (strain IP 31758).